A 430-amino-acid chain; its full sequence is MKKYDRGWASLETGAALLIVMLLIAWGAGIWQDYIQTKGWQTEARLVSNWTSAARSYIGKNYTTLQGSSTTTTPAVITTTMLKNTGFLSSGFTETNSEGQRLQAYVVRNAQNPELLQAMVVSSGGTPYPVKALIQMAKDITTGLGGYIQDGKTATGALRSWSVALSNYGAKSGNGHIAVLLSTDELSGAAEDTDRLYRFQVNGRPDLNKMHTAIDMGSNNLNNVGAVNAQTGNFSGNVNGVNGTFSGQVKGNSGNFDVNVTAGGDIRSNNGWLITRNSKGWLNETHGGGFYMSDGSWVRSVNNKGIYTGGQVKGGTVRADGRLYTGEYLQLERTAVAGASCSPNGLVGRDNTGAILSCQSGTWGTIGGKLKVTQLSTTGYLGQFDFCAIARMGNAEDAHYCQVVESPAGSRKWYKYEHKTGCIASCVTLN.

The constant region stretch occupies residues 1–361; that stretch reads MKKYDRGWAS…TGAILSCQSG (361 aa). The interval 362-430 is variable region; sequence TWGTIGGKLK…GCIASCVTLN (69 aa).

This is Shufflon protein A' from Escherichia coli.